The primary structure comprises 484 residues: Glutamate--tRNA ligase (484 aa).

The 'HIGH' region motif lies at 11-21; the sequence is PSPTGLLHIGN. The 'KMSKS' region motif lies at 255–259; the sequence is KLSKR. ATP is bound at residue K258.

Belongs to the class-I aminoacyl-tRNA synthetase family. Glutamate--tRNA ligase type 1 subfamily. As to quaternary structure, monomer.

The protein localises to the cytoplasm. The catalysed reaction is tRNA(Glu) + L-glutamate + ATP = L-glutamyl-tRNA(Glu) + AMP + diphosphate. In terms of biological role, catalyzes the attachment of glutamate to tRNA(Glu) in a two-step reaction: glutamate is first activated by ATP to form Glu-AMP and then transferred to the acceptor end of tRNA(Glu). This Streptococcus agalactiae serotype III (strain NEM316) protein is Glutamate--tRNA ligase.